The following is an 858-amino-acid chain: Leucine--tRNA ligase (858 aa).

A 'HIGH' region motif is present at residues 42–52 (PYPSGRLHMGH). The short motif at 618–622 (KMSKS) is the 'KMSKS' region element. K621 is an ATP binding site.

The protein belongs to the class-I aminoacyl-tRNA synthetase family.

It is found in the cytoplasm. It carries out the reaction tRNA(Leu) + L-leucine + ATP = L-leucyl-tRNA(Leu) + AMP + diphosphate. The chain is Leucine--tRNA ligase from Aeromonas salmonicida (strain A449).